The following is a 297-amino-acid chain: tRNA (guanine-N(7)-)-methyltransferase (297 aa).

S-adenosyl-L-methionine is bound by residues glycine 101, 124-125 (EI), 171-172 (NT), and cysteine 191. Residue aspartate 194 is part of the active site. An S-adenosyl-L-methionine-binding site is contributed by 270–272 (TEE).

Belongs to the class I-like SAM-binding methyltransferase superfamily. TrmB family. Forms a complex with trm82.

It is found in the nucleus. The catalysed reaction is guanosine(46) in tRNA + S-adenosyl-L-methionine = N(7)-methylguanosine(46) in tRNA + S-adenosyl-L-homocysteine. The protein operates within tRNA modification; N(7)-methylguanine-tRNA biosynthesis. Its function is as follows. Catalyzes the formation of N(7)-methylguanine at position 46 (m7G46) in tRNA. In Aspergillus niger (strain ATCC MYA-4892 / CBS 513.88 / FGSC A1513), this protein is tRNA (guanine-N(7)-)-methyltransferase (trm8).